A 403-amino-acid polypeptide reads, in one-letter code: MEIYIRLNADVEHDYAFQVSNEDTINNKIKKIFPSKTGLADLMVLRPSIFHEKEPVKFYKSIHPGYLSEGGCLMFHYEADNEENLEELNDSKPLIDQLWPGQLVVPEWKLSKKNIWVYTIIMLAWLYTDLPDAISPTPGICLTNQLSRLLIPVAKHMDLPEIAAKLEQEVQANYSSLVAQWLFFVMHIFKVGIITLFLKLGIANPISFNPYKLWSLRDLTSPSANGAKNSGGNNNTTDLKTRLRSLGWIGAKRATYDDYQTNYYNYVIDKMGGAVAAYRAGAIRKAAAPGIQLVAGEGFQSPLEDRFTASTFTAIKTERKFILSEEYFVELENNLKKILEEYDGDIGKMNAEIRRFRRFGIYEPDEKLASLVKLRREIADEKEKASNNDATFGIKKNDLKKSN.

Topologically, residues 1-177 (MEIYIRLNAD…QEVQANYSSL (177 aa)) are lumenal. Residues Asn-89 and Asn-173 are each glycosylated (N-linked (GlcNAc...) asparagine). Residues 178-198 (VAQWLFFVMHIFKVGIITLFL) form a helical; Signal-anchor for type II membrane protein membrane-spanning segment. Over 199–403 (KLGIANPISF…IKKNDLKKSN (205 aa)) the chain is Cytoplasmic. Positions 330-388 (ELENNLKKILEEYDGDIGKMNAEIRRFRRFGIYEPDEKLASLVKLRREIADEKEKASNN) form a coiled coil.

It localises to the endoplasmic reticulum membrane. Functionally, may be involved in the secretion of hexose transporters from the endoplasmic reticulum. Involved in secretion of GAL2 and HXT1. The protein is Glucose-signaling factor 2 (GSF2) of Saccharomyces cerevisiae (strain ATCC 204508 / S288c) (Baker's yeast).